A 106-amino-acid chain; its full sequence is UPF0145 protein GSU2791 (106 aa).

The protein belongs to the UPF0145 family.

This is UPF0145 protein GSU2791 from Geobacter sulfurreducens (strain ATCC 51573 / DSM 12127 / PCA).